We begin with the raw amino-acid sequence, 111 residues long: MEARAIAKYVRMSPRKVRVVLDLVRGKNVSEAFAILKYTPKDAATVVLKVLKSAVANAENNFNLDVNKLYIAEAYANQGPTLKRFKPRAQGRAYSIMKRTSHVTLVVKERA.

It belongs to the universal ribosomal protein uL22 family. Part of the 50S ribosomal subunit.

In terms of biological role, this protein binds specifically to 23S rRNA; its binding is stimulated by other ribosomal proteins, e.g. L4, L17, and L20. It is important during the early stages of 50S assembly. It makes multiple contacts with different domains of the 23S rRNA in the assembled 50S subunit and ribosome. Its function is as follows. The globular domain of the protein is located near the polypeptide exit tunnel on the outside of the subunit, while an extended beta-hairpin is found that lines the wall of the exit tunnel in the center of the 70S ribosome. The protein is Large ribosomal subunit protein uL22 of Clostridium novyi (strain NT).